The sequence spans 143 residues: Hemoglobin cathodic subunit alpha (143 aa).

At serine 1 the chain carries N-acetylserine. Positions 1–143 constitute a Globin domain; that stretch reads SLAPGDKTVV…VCAALSDKYR (143 aa). Histidine 59 is a binding site for O2. Histidine 89 is a binding site for heme b.

This sequence belongs to the globin family. In terms of assembly, heterotetramer of two alpha chains and two beta chains. Red blood cells.

Its function is as follows. Involved in oxygen transport from gills to the various peripheral tissues. This chain is Hemoglobin cathodic subunit alpha, found in Gymnothorax unicolor (Brown moray).